The chain runs to 376 residues: Alpha-2,8-sialyltransferase 8E (376 aa).

Topologically, residues 1–17 are cytoplasmic; the sequence is MRYADPSANRDLLGNRT. Residues 18-38 traverse the membrane as a helical; Signal-anchor for type II membrane protein segment; that stretch reads LLFIFICAFALVTLLQQILYG. Residues 39–376 lie on the Lumenal side of the membrane; it reads RNYIKRYFEF…RVHTGTCSCC (338 aa). Residues N56 and N96 are each glycosylated (N-linked (GlcNAc...) asparagine). Disulfide bonds link C164-C313 and C178-C373. Substrate-binding positions include N192 and 214-216; that span reads NPS. Residues N241 and N284 are each glycosylated (N-linked (GlcNAc...) asparagine). 300–302 provides a ligand contact to substrate; that stretch reads STG. H348 serves as the catalytic Proton donor/acceptor.

This sequence belongs to the glycosyltransferase 29 family.

The protein localises to the golgi apparatus membrane. The enzyme catalyses a ganglioside GQ1c (d18:1(4E)) + CMP-N-acetyl-beta-neuraminate = a ganglioside GP1c (d18:1(4E)) + CMP + H(+). It functions in the pathway protein modification; protein glycosylation. Its function is as follows. Involved in the synthesis of gangliosides GD1c, GT1a, GQ1b, GP1c and GT3 from GD1a, GT1b, GM1b and GD3 respectively. This is Alpha-2,8-sialyltransferase 8E (ST8SIA5) from Pan troglodytes (Chimpanzee).